Reading from the N-terminus, the 536-residue chain is ATPase expression protein 3 (536 aa).

2 PPR repeats span residues 212 to 246 (TTTM…KKTP) and 386 to 421 (TTGS…GVTP).

It localises to the mitochondrion inner membrane. Required for respiration. The polypeptide is ATPase expression protein 3 (AEP3) (Eremothecium gossypii (strain ATCC 10895 / CBS 109.51 / FGSC 9923 / NRRL Y-1056) (Yeast)).